The chain runs to 122 residues: Large ribosomal subunit protein uL14 (122 aa).

It belongs to the universal ribosomal protein uL14 family. Part of the 50S ribosomal subunit. Forms a cluster with proteins L3 and L19. In the 70S ribosome, L14 and L19 interact and together make contacts with the 16S rRNA in bridges B5 and B8.

Its function is as follows. Binds to 23S rRNA. Forms part of two intersubunit bridges in the 70S ribosome. The polypeptide is Large ribosomal subunit protein uL14 (Psychromonas ingrahamii (strain DSM 17664 / CCUG 51855 / 37)).